The sequence spans 194 residues: UPF0215 protein Mbar_A0619 (194 aa).

It belongs to the UPF0215 family.

The polypeptide is UPF0215 protein Mbar_A0619 (Methanosarcina barkeri (strain Fusaro / DSM 804)).